A 351-amino-acid polypeptide reads, in one-letter code: Protein RecA (351 aa).

73 to 80 (GPESSGKT) serves as a coordination point for ATP.

This sequence belongs to the RecA family.

The protein localises to the cytoplasm. Its function is as follows. Can catalyze the hydrolysis of ATP in the presence of single-stranded DNA, the ATP-dependent uptake of single-stranded DNA by duplex DNA, and the ATP-dependent hybridization of homologous single-stranded DNAs. It interacts with LexA causing its activation and leading to its autocatalytic cleavage. This Oleidesulfovibrio alaskensis (strain ATCC BAA-1058 / DSM 17464 / G20) (Desulfovibrio alaskensis) protein is Protein RecA.